We begin with the raw amino-acid sequence, 579 residues long: Putative adenine deaminase OB0751 (579 aa).

Belongs to the metallo-dependent hydrolases superfamily. Adenine deaminase family.

It carries out the reaction adenine + H2O + H(+) = hypoxanthine + NH4(+). The polypeptide is Putative adenine deaminase OB0751 (Oceanobacillus iheyensis (strain DSM 14371 / CIP 107618 / JCM 11309 / KCTC 3954 / HTE831)).